The chain runs to 288 residues: ATP synthase gamma chain (288 aa).

The protein belongs to the ATPase gamma chain family. F-type ATPases have 2 components, CF(1) - the catalytic core - and CF(0) - the membrane proton channel. CF(1) has five subunits: alpha(3), beta(3), gamma(1), delta(1), epsilon(1). CF(0) has three main subunits: a, b and c.

It localises to the cell inner membrane. Functionally, produces ATP from ADP in the presence of a proton gradient across the membrane. The gamma chain is believed to be important in regulating ATPase activity and the flow of protons through the CF(0) complex. The sequence is that of ATP synthase gamma chain from Actinobacillus pleuropneumoniae serotype 3 (strain JL03).